The chain runs to 552 residues: MERFLRKYNISGDYANATRTFLAISPQWTCSHLKRNCLFNGMCVKQHFERAMIAATDAEEPAKAYKLVELAKEAMYDRETVWLQCFKSFSQPYEEDVEGKMKRCGAQLLEDYRKSGMMDEAVKQSALVNSERIRLDDSLSAMPYIYVPINNGQIVNPTFISRYRQIAYYFYNPDAADDWIDPNLFGIRGQHNQIKREVERQINTCPYTGYRGRVFQVMFLPIQLINFLRMDDFAKHFNRYASMAIQQYLRVGYAEEIRYVQQLFGKVPTGEFPLHQMMLMRRDLPTRDRSIVEARVRRSGDENWQSWLLPMIIIREGLDHQDRWEWFIDYMDRKHTCQLCYLKHSKQIPACSVIDVRASELTGCSPFKMVKIEEHVGNDSVFKTKLVRDEQIGRIGDHYYTTNCYTGAEALITTAIHIHRWIRGSGIWNDEGWQEGIFMLGRVLLRWELTKAQRSALLRLFCFVCYGYAPRADGTIPDWNNLGNFLDIILKGPELSEDEDERAYATMFEMVRCIITLCYAEKVHFAGFAAPACEGGEVINLAARMSQMWMEY.

This sequence belongs to the orbivirus non-structural protein NS1 family.

This Bluetongue virus 13 (isolate USA) (BTV 13) protein is Non-structural protein NS1 (Segment-5).